A 284-amino-acid polypeptide reads, in one-letter code: L-ribulose-5-phosphate 3-epimerase UlaE (284 aa).

It belongs to the L-ribulose-5-phosphate 3-epimerase family.

The enzyme catalyses L-ribulose 5-phosphate = L-xylulose 5-phosphate. Its pathway is cofactor degradation; L-ascorbate degradation; D-xylulose 5-phosphate from L-ascorbate: step 3/4. Catalyzes the isomerization of L-xylulose-5-phosphate to L-ribulose-5-phosphate. Is involved in the anaerobic L-ascorbate utilization. This Salmonella typhimurium (strain LT2 / SGSC1412 / ATCC 700720) protein is L-ribulose-5-phosphate 3-epimerase UlaE.